The primary structure comprises 340 residues: Formimidoylglutamase (340 aa).

Mn(2+) is bound by residues His-129, Asp-160, His-162, Asp-164, Asp-257, and Asp-259.

It belongs to the arginase family. The cofactor is Mn(2+).

The catalysed reaction is N-formimidoyl-L-glutamate + H2O = formamide + L-glutamate. Its pathway is amino-acid degradation; L-histidine degradation into L-glutamate; L-glutamate from N-formimidoyl-L-glutamate (hydrolase route): step 1/1. Functionally, catalyzes the conversion of N-formimidoyl-L-glutamate to L-glutamate and formamide. The sequence is that of Formimidoylglutamase from Vibrio parahaemolyticus serotype O3:K6 (strain RIMD 2210633).